Here is a 200-residue protein sequence, read N- to C-terminus: Urease accessory protein UreG (200 aa).

Gly-11–Thr-18 serves as a coordination point for GTP.

This sequence belongs to the SIMIBI class G3E GTPase family. UreG subfamily. Homodimer. UreD, UreF and UreG form a complex that acts as a GTP-hydrolysis-dependent molecular chaperone, activating the urease apoprotein by helping to assemble the nickel containing metallocenter of UreC. The UreE protein probably delivers the nickel.

It localises to the cytoplasm. Its function is as follows. Facilitates the functional incorporation of the urease nickel metallocenter. This process requires GTP hydrolysis, probably effectuated by UreG. This is Urease accessory protein UreG from Thermosynechococcus vestitus (strain NIES-2133 / IAM M-273 / BP-1).